The following is a 218-amino-acid chain: Phosphatidylserine decarboxylase proenzyme (218 aa).

Ser182 acts as the Schiff-base intermediate with substrate; via pyruvic acid in catalysis. Ser182 is subject to Pyruvic acid (Ser); by autocatalysis.

Belongs to the phosphatidylserine decarboxylase family. PSD-A subfamily. As to quaternary structure, heterodimer of a large membrane-associated beta subunit and a small pyruvoyl-containing alpha subunit. The cofactor is pyruvate. Post-translationally, is synthesized initially as an inactive proenzyme. Formation of the active enzyme involves a self-maturation process in which the active site pyruvoyl group is generated from an internal serine residue via an autocatalytic post-translational modification. Two non-identical subunits are generated from the proenzyme in this reaction, and the pyruvate is formed at the N-terminus of the alpha chain, which is derived from the carboxyl end of the proenzyme. The post-translation cleavage follows an unusual pathway, termed non-hydrolytic serinolysis, in which the side chain hydroxyl group of the serine supplies its oxygen atom to form the C-terminus of the beta chain, while the remainder of the serine residue undergoes an oxidative deamination to produce ammonia and the pyruvoyl prosthetic group on the alpha chain.

Its subcellular location is the cell membrane. The catalysed reaction is a 1,2-diacyl-sn-glycero-3-phospho-L-serine + H(+) = a 1,2-diacyl-sn-glycero-3-phosphoethanolamine + CO2. The protein operates within phospholipid metabolism; phosphatidylethanolamine biosynthesis; phosphatidylethanolamine from CDP-diacylglycerol: step 2/2. Functionally, catalyzes the formation of phosphatidylethanolamine (PtdEtn) from phosphatidylserine (PtdSer). The polypeptide is Phosphatidylserine decarboxylase proenzyme (Oleidesulfovibrio alaskensis (strain ATCC BAA-1058 / DSM 17464 / G20) (Desulfovibrio alaskensis)).